Here is a 157-residue protein sequence, read N- to C-terminus: Large ribosomal subunit protein bL34c (157 aa).

The transit peptide at 1–97 directs the protein to the chloroplast; that stretch reads MASLSTSVVA…GQRRRGLVVR (97 aa).

It belongs to the bacterial ribosomal protein bL34 family. In terms of assembly, part of the 50S ribosomal subunit.

Its subcellular location is the plastid. It is found in the chloroplast. Functionally, this protein binds directly to 23S ribosomal RNA. This Arabidopsis thaliana (Mouse-ear cress) protein is Large ribosomal subunit protein bL34c (RPL34).